Reading from the N-terminus, the 457-residue chain is uncharacterized protein (457 aa).

The next 14 helical transmembrane spans lie at Tyr15–Ala35, Ile54–Leu74, Gly87–Leu107, Val112–Ile132, Ile144–Leu164, Ile166–Leu186, Leu205–Phe225, Gln229–Ile249, Leu269–Val289, Leu308–Ile328, Gly334–Leu354, Ser357–Phe377, Met400–Leu420, and Thr428–Leu448.

Belongs to the major facilitator superfamily. TCR/Tet family.

The protein resides in the cell inner membrane. This is an uncharacterized protein from Escherichia coli (strain K12).